The sequence spans 302 residues: Sulfate adenylyltransferase subunit 2 (302 aa).

This sequence belongs to the PAPS reductase family. CysD subfamily. In terms of assembly, heterodimer composed of CysD, the smaller subunit, and CysN.

It carries out the reaction sulfate + ATP + H(+) = adenosine 5'-phosphosulfate + diphosphate. It functions in the pathway sulfur metabolism; hydrogen sulfide biosynthesis; sulfite from sulfate: step 1/3. In terms of biological role, with CysN forms the ATP sulfurylase (ATPS) that catalyzes the adenylation of sulfate producing adenosine 5'-phosphosulfate (APS) and diphosphate, the first enzymatic step in sulfur assimilation pathway. APS synthesis involves the formation of a high-energy phosphoric-sulfuric acid anhydride bond driven by GTP hydrolysis by CysN coupled to ATP hydrolysis by CysD. The protein is Sulfate adenylyltransferase subunit 2 of Enterobacter sp. (strain 638).